The sequence spans 1356 residues: Transmembrane protein 94 (1356 aa).

The Cytoplasmic portion of the chain corresponds to methionine 1–cysteine 64. The helical transmembrane segment at phenylalanine 65 to glycine 85 threads the bilayer. Over glycine 86–arginine 92 the chain is Lumenal. A helical membrane pass occupies residues glycine 93–isoleucine 113. Residues glycine 114–arginine 273 lie on the Cytoplasmic side of the membrane. 2 positions are modified to phosphoserine: serine 221 and serine 225. Residues phenylalanine 274–isoleucine 294 form a helical membrane-spanning segment. Residues threonine 295–asparagine 320 are Lumenal-facing. A helical transmembrane segment spans residues glycine 321–glycine 341. Topologically, residues glutamate 342–cysteine 1092 are cytoplasmic. Residues aspartate 417–leucine 422 carry the DKQGIL motif. 2 disordered regions span residues valine 439–proline 461 and glutamate 483–proline 541. Basic and acidic residues predominate over residues glutamate 440–leucine 449. Phosphoserine occurs at positions 444, 445, and 454. Residues histidine 502–histidine 511 show a composition bias toward basic residues. A phosphoserine mark is found at serine 513, serine 518, serine 798, and serine 941. A helical transmembrane segment spans residues phenylalanine 1093–valine 1113. The Lumenal portion of the chain corresponds to glutamine 1114–serine 1120. Residues threonine 1121 to glycine 1141 traverse the membrane as a helical segment. Residues lysine 1142 to tyrosine 1167 are Cytoplasmic-facing. Residues phenylalanine 1168–glycine 1188 traverse the membrane as a helical segment. The Lumenal portion of the chain corresponds to phenylalanine 1189–glycine 1228. N-linked (GlcNAc...) asparagine glycosylation is found at asparagine 1202 and asparagine 1205. A helical transmembrane segment spans residues leucine 1229–isoleucine 1249. At threonine 1250–lysine 1261 the chain is on the cytoplasmic side. A helical transmembrane segment spans residues serine 1262–valine 1282. Topologically, residues glutamine 1283–proline 1306 are lumenal. The helical transmembrane segment at leucine 1307–valine 1327 threads the bilayer. Residues lysine 1328 to phenylalanine 1356 are Cytoplasmic-facing. A GMN; metal-binding motif motif is present at residues glycine 1351 to asparagine 1353.

As to quaternary structure, forms homooligomers. In terms of tissue distribution, expressed ubiquitously.

It localises to the endoplasmic reticulum membrane. Functionally, could function in the uptake of Mg(2+) from the cytosol into the endoplasmic reticulum and regulate intracellular Mg(2+) homeostasis. This is Transmembrane protein 94 from Homo sapiens (Human).